We begin with the raw amino-acid sequence, 121 residues long: MRLTMMKCKLHRATVTQADLHYEGSISIDRDYLEAAGILPHEQVDVLNINNGERFTTYAIEAPRGSRTFGINGAAARLAQVGDRIIVVAYAEMEAAEAEQHDPVVVLLDEHNKVIAKPQAA.

Ser-25 serves as the catalytic Schiff-base intermediate with substrate; via pyruvic acid. Ser-25 carries the pyruvic acid (Ser) modification. Thr-57 lines the substrate pocket. The active-site Proton donor is the Tyr-58. A substrate-binding site is contributed by 73 to 75; that stretch reads GAA.

Belongs to the PanD family. As to quaternary structure, heterooctamer of four alpha and four beta subunits. The cofactor is pyruvate. Post-translationally, is synthesized initially as an inactive proenzyme, which is activated by self-cleavage at a specific serine bond to produce a beta-subunit with a hydroxyl group at its C-terminus and an alpha-subunit with a pyruvoyl group at its N-terminus.

It is found in the cytoplasm. It catalyses the reaction L-aspartate + H(+) = beta-alanine + CO2. It participates in cofactor biosynthesis; (R)-pantothenate biosynthesis; beta-alanine from L-aspartate: step 1/1. Functionally, catalyzes the pyruvoyl-dependent decarboxylation of aspartate to produce beta-alanine. This is Aspartate 1-decarboxylase from Maricaulis maris (strain MCS10) (Caulobacter maris).